The following is a 146-amino-acid chain: NADH-quinone oxidoreductase subunit A (146 aa).

Transmembrane regions (helical) follow at residues 16–36, 68–88, and 98–118; these read FAIFLIVAIGLCCLMLIGGWF, FYLVAMFFVIFDVEALYLFAW, and VGFVEAAIFILVLLAGLVYLV.

It belongs to the complex I subunit 3 family. NDH-1 is composed of 13 different subunits. Subunits NuoA, H, J, K, L, M, N constitute the membrane sector of the complex.

The protein resides in the cell inner membrane. The enzyme catalyses a quinone + NADH + 5 H(+)(in) = a quinol + NAD(+) + 4 H(+)(out). In terms of biological role, NDH-1 shuttles electrons from NADH, via FMN and iron-sulfur (Fe-S) centers, to quinones in the respiratory chain. The immediate electron acceptor for the enzyme in this species is believed to be ubiquinone. Couples the redox reaction to proton translocation (for every two electrons transferred, four hydrogen ions are translocated across the cytoplasmic membrane), and thus conserves the redox energy in a proton gradient. The chain is NADH-quinone oxidoreductase subunit A from Enterobacter sp. (strain 638).